The following is a 555-amino-acid chain: Putative outer capsid protein p10 (555 aa).

The protein resides in the virion. The chain is Putative outer capsid protein p10 (S10) from Saccharum officinarum (Sugarcane).